A 175-amino-acid polypeptide reads, in one-letter code: NADH-ubiquinone oxidoreductase chain 6 (175 aa).

The next 6 helical transmembrane spans lie at 1–21 (MMYI…GFSS), 25–45 (PVYG…IIMG), 51–71 (LGLV…GYTI), 87–107 (VVLG…MWLF), 112–132 (ELVG…EGGF), and 148–168 (YGFW…FIAI).

Belongs to the complex I subunit 6 family. As to quaternary structure, core subunit of respiratory chain NADH dehydrogenase (Complex I) which is composed of 45 different subunits.

It localises to the mitochondrion inner membrane. It catalyses the reaction a ubiquinone + NADH + 5 H(+)(in) = a ubiquinol + NAD(+) + 4 H(+)(out). Core subunit of the mitochondrial membrane respiratory chain NADH dehydrogenase (Complex I) which catalyzes electron transfer from NADH through the respiratory chain, using ubiquinone as an electron acceptor. Essential for the catalytic activity and assembly of complex I. This is NADH-ubiquinone oxidoreductase chain 6 (MT-ND6) from Loxodonta africana (African elephant).